Consider the following 380-residue polypeptide: Transcription factor SOX-7 (380 aa).

The tract at residues 24-43 is disordered; that stretch reads SDGLSPPAVPRPSGDKSSES. Residues 45 to 113 constitute a DNA-binding region (HMG box); it reads IRRPMNAFMV…QHMQDYPNYK (69 aa). The interval 139–167 is disordered; sequence SRDQNTLPEKNGIGRGEKEDRGEYSPGAT. Residues 260-380 enclose the Sox C-terminal domain; sequence VSMMSSVSGC…ATYYNSYSVS (121 aa). The segment at 323–328 is required for beta-catenin-binding; the sequence is EFDQYL.

In terms of assembly, interacts with CTNNB1/beta-catenin; this interaction may lead to the proteasomal degradation of active CTNNB1 and thus inhibition of Wnt/beta-catenin-stimulated transcription. In terms of tissue distribution, predominantly expressed in ovary, lung and heart. In the ovary, restricted to oocytes (at protein level). Present both in mesenchymal and epithelial cells in some adult tissues, including ear.

It is found in the nucleus. The protein localises to the cytoplasm. Functionally, binds to and activates the CDH5 promoter, hence plays a role in the transcriptional regulation of genes expressed in the hemogenic endothelium and blocks further differentiation into blood precursors. May be required for the survival of both hematopoietic and endothelial precursors during specification. May play a role in skeletal myogenesis and up-regulate the expression of muscle markers, such as PAX3/PAX7 and Meox1. Competes with GATA4 for binding and activation of the FGF3 promoter. Represses Wnt/beta-catenin-stimulated transcription. Probably acts by targeting CTNNB1 to proteasomal degradation. Binds the DNA sequence 5'-AACAAT-3'. The polypeptide is Transcription factor SOX-7 (Sox7) (Mus musculus (Mouse)).